A 127-amino-acid chain; its full sequence is Holo-[acyl-carrier-protein] synthase (127 aa).

Residues aspartate 9 and glutamate 58 each coordinate Mg(2+).

The protein belongs to the P-Pant transferase superfamily. AcpS family. Mg(2+) serves as cofactor.

Its subcellular location is the cytoplasm. The catalysed reaction is apo-[ACP] + CoA = holo-[ACP] + adenosine 3',5'-bisphosphate + H(+). Its function is as follows. Transfers the 4'-phosphopantetheine moiety from coenzyme A to a Ser of acyl-carrier-protein. The chain is Holo-[acyl-carrier-protein] synthase from Shewanella baltica (strain OS223).